A 361-amino-acid polypeptide reads, in one-letter code: Phosphoserine aminotransferase (361 aa).

Arginine 43 contacts L-glutamate. Residues 77 to 78 (AS), tryptophan 103, threonine 153, aspartate 172, and glutamine 195 each bind pyridoxal 5'-phosphate. Lysine 196 is subject to N6-(pyridoxal phosphate)lysine. A pyridoxal 5'-phosphate-binding site is contributed by 237–238 (NT).

Belongs to the class-V pyridoxal-phosphate-dependent aminotransferase family. SerC subfamily. In terms of assembly, homodimer. Requires pyridoxal 5'-phosphate as cofactor.

It localises to the cytoplasm. The enzyme catalyses O-phospho-L-serine + 2-oxoglutarate = 3-phosphooxypyruvate + L-glutamate. It catalyses the reaction 4-(phosphooxy)-L-threonine + 2-oxoglutarate = (R)-3-hydroxy-2-oxo-4-phosphooxybutanoate + L-glutamate. It participates in amino-acid biosynthesis; L-serine biosynthesis; L-serine from 3-phospho-D-glycerate: step 2/3. It functions in the pathway cofactor biosynthesis; pyridoxine 5'-phosphate biosynthesis; pyridoxine 5'-phosphate from D-erythrose 4-phosphate: step 3/5. Functionally, catalyzes the reversible conversion of 3-phosphohydroxypyruvate to phosphoserine and of 3-hydroxy-2-oxo-4-phosphonooxybutanoate to phosphohydroxythreonine. In Desulfotalea psychrophila (strain LSv54 / DSM 12343), this protein is Phosphoserine aminotransferase.